Here is a 35-residue protein sequence, read N- to C-terminus: MSLRMHYTIQRPTNMSSSRGYRDHRMHLSLTSKMQ.

The polypeptide is Probable protein L3 (Odocoileus virginianus papillomavirus 1 (DPV)).